A 471-amino-acid polypeptide reads, in one-letter code: 3-isopropylmalate dehydratase large subunit (471 aa).

Residues Cys-347, Cys-407, and Cys-410 each contribute to the [4Fe-4S] cluster site.

The protein belongs to the aconitase/IPM isomerase family. LeuC type 1 subfamily. Heterodimer of LeuC and LeuD. [4Fe-4S] cluster is required as a cofactor.

The catalysed reaction is (2R,3S)-3-isopropylmalate = (2S)-2-isopropylmalate. Its pathway is amino-acid biosynthesis; L-leucine biosynthesis; L-leucine from 3-methyl-2-oxobutanoate: step 2/4. Its function is as follows. Catalyzes the isomerization between 2-isopropylmalate and 3-isopropylmalate, via the formation of 2-isopropylmaleate. This Geobacillus sp. (strain WCH70) protein is 3-isopropylmalate dehydratase large subunit.